The chain runs to 115 residues: UPF0102 protein Kole_1919 (115 aa).

The protein belongs to the UPF0102 family.

This is UPF0102 protein Kole_1919 from Kosmotoga olearia (strain ATCC BAA-1733 / DSM 21960 / TBF 19.5.1).